An 889-amino-acid chain; its full sequence is Alanine--tRNA ligase (889 aa).

Zn(2+) is bound by residues H566, H570, C683, and H687.

It belongs to the class-II aminoacyl-tRNA synthetase family. The cofactor is Zn(2+).

Its subcellular location is the cytoplasm. It catalyses the reaction tRNA(Ala) + L-alanine + ATP = L-alanyl-tRNA(Ala) + AMP + diphosphate. Its function is as follows. Catalyzes the attachment of alanine to tRNA(Ala) in a two-step reaction: alanine is first activated by ATP to form Ala-AMP and then transferred to the acceptor end of tRNA(Ala). Also edits incorrectly charged Ser-tRNA(Ala) and Gly-tRNA(Ala) via its editing domain. In Herpetosiphon aurantiacus (strain ATCC 23779 / DSM 785 / 114-95), this protein is Alanine--tRNA ligase.